The following is a 917-amino-acid chain: Interleukin-6 receptor subunit beta (917 aa).

The signal sequence occupies residues 1 to 22 (MSAPRIWLAQALLFFLTTESIG). Over 23 to 617 (QLLEPCGYIY…TPKFAQGEIE (595 aa)) the chain is Extracellular. An Ig-like C2-type domain is found at 26 to 120 (EPCGYIYPEF…IEQNVYGVTM (95 aa)). Disulfide bonds link Cys-28–Cys-54 and Cys-48–Cys-103. 4 N-linked (GlcNAc...) asparagine glycosylation sites follow: Asn-43, Asn-61, Asn-83, and Asn-131. 5 consecutive Fibronectin type-III domains span residues 128 to 221 (KPTN…VKPT), 222 to 322 (PPYN…TYED), 327 to 417 (PPSF…IPSP), 422 to 515 (AYSV…LKQA), and 517 to 611 (PARG…TPKF). A disulfide bridge links Cys-134 with Cys-144. Asn-157 carries N-linked (GlcNAc...) asparagine glycosylation. Cys-172 and Cys-180 are oxidised to a cystine. Asn-225 carries N-linked (GlcNAc...) asparagine glycosylation. Positions 308-312 (WSDWS) match the WSXWS motif motif. N-linked (GlcNAc...) asparagine glycosylation is present at Asn-388. Cys-456 and Cys-464 are oxidised to a cystine. Residues Asn-476 and Asn-551 are each glycosylated (N-linked (GlcNAc...) asparagine). The chain crosses the membrane as a helical span at residues 618–639 (AIVVPVCLAFLLTTLLGVLFCF). Over 640–917 (NKRDLIKKHI…TVRQGGYMPQ (278 aa)) the chain is Cytoplasmic. The Box 1 motif signature appears at 649–657 (IWPNVPDPS). 2 disordered regions span residues 658-678 (KSHIAQWSPHTPPRHNFNSKD) and 719-754 (TEGHSSGIGGSSCMSSSRPSISSNEENESAQSTAST). Residues Ser-659 and Ser-665 each carry the phosphoserine modification. A compositionally biased stretch (low complexity) spans 729 to 753 (SSCMSSSRPSISSNEENESAQSTAS). Ser-780, Ser-787, Ser-827, and Ser-837 each carry phosphoserine. A disordered region spans residues 898–917 (EEIPKSYLPQTVRQGGYMPQ).

It belongs to the type I cytokine receptor family. Type 2 subfamily. In terms of assembly, component of a hexamer of two molecules each of IL6, IL6R and IL6ST; associates with the complex IL6:IL6R but does not interact with IL6. Forms heterodimers composed of LIFR and IL6ST (type I OSM receptor) which are activated by LIF and OSM. Also forms heterodimers composed of OSMR and IL6ST (type II receptor) which are activated by OSM but not by LIF. Interacts with HCK. Interacts with INPP5D/SHIP1. Interacts with SRC and YES. Interacts with ARMH4; this interaction prevents IL6ST protein homodimerization and bridges ARMH4 with IL6R and STAT3 and therefore inhibits phosphorylation of STAT3 at 'Tyr-705'. Post-translationally, phosphorylation of Ser-780 down-regulates cell surface expression. Heavily N-glycosylated. Glycosylation is required for protein stability and localization in plasma membrane but not for ligand binding. As to expression, expression not restricted to IL6-responsive cells. Found in tissues such as brain, heart, thymus, spleen, kidney, lung and liver. Found in all the cell lines tested except BaF-B03. Expressed paraventricular nucleus of the hypothalamus.

The protein resides in the cell membrane. Signal-transducing molecule. The receptor systems for IL6, LIF, OSM, CNTF, IL11, CTF1 and BSF3 can utilize IL6ST for initiating signal transmission. Binding of IL6 to IL6R induces IL6ST homodimerization and formation of a high-affinity receptor complex, which activates the intracellular JAK-MAPK and JAK-STAT3 signaling pathways. That causes phosphorylation of IL6ST tyrosine residues which in turn activates STAT3. In parallel, the IL6 signaling pathway induces the expression of two cytokine receptor signaling inhibitors, SOCS1 and SOCS3, which inhibit JAK and terminate the activity of the IL6 signaling pathway as a negative feedback loop. Also activates the yes-associated protein 1 (YAP) and NOTCH pathways to control inflammation-induced epithelial regeneration, independently of STAT3. Mediates signals which regulate immune response, hematopoiesis, pain control and bone metabolism. Has a role in embryonic development. Essential for survival of motor and sensory neurons and for differentiation of astrocytes. Required for expression of TRPA1 in nociceptive neurons. Required for the maintenance of PTH1R expression in the osteoblast lineage and for the stimulation of PTH-induced osteoblast differentiation. Required for normal trabecular bone mass and cortical bone composition. The sequence is that of Interleukin-6 receptor subunit beta from Mus musculus (Mouse).